We begin with the raw amino-acid sequence, 908 residues long: DNA (cytosine-5)-methyltransferase 3A (908 aa).

The segment covering 1 to 13 (MPSSGPGDTSSSS) has biased composition (low complexity). Disordered regions lie at residues 1-183 (MPSS…PMPR) and 226-281 (NQAS…PEYE). Basic and acidic residues predominate over residues 14-37 (LEREDDRKEGEEQEENRGKEERQE). The segment covering 44 to 54 (KVGRPGRKRKH) has biased composition (basic residues). Residues 69–80 (TTKSQPMAQDSG) are compositionally biased toward polar residues. Position 102 is a phosphoserine (S102). Over residues 110–124 (GAPAEGEGTETPPEA) the composition is skewed to low complexity. Residue T120 is modified to Phosphothreonine. A Glycyl lysine isopeptide (Lys-Gly) (interchain with G-Cter in SUMO2) cross-link involves residue K158. R167 bears the Omega-N-methylarginine mark. The tract at residues 195 to 399 (SKRKRDEWLA…DSGKAVEVQN (205 aa)) is interaction with DNMT1 and DNMT3B. S239 and S251 each carry phosphoserine. Over residues 242–256 (AVQQPTDPASPTVAT) the composition is skewed to polar residues. T257 is subject to Phosphothreonine. Over residues 265-275 (AGDKNATKAAD) the composition is skewed to basic and acidic residues. The region spanning 288–346 (IGELVWGKLRGFSWWPGRIVSWWMTGRSRAAEGTRWVMWFGDGKFSVVCVEKLMPLSSF) is the PWWP domain. S386 and S389 each carry phosphoserine. The disordered stretch occupies residues 443 to 462 (AYAPPPPAKKPRKSTTEKPK). The ADD domain maps to 478–610 (EVRQKCRNIE…LQMFFANNHD (133 aa)). A GATA-type; atypical zinc finger spans residues 489-519 (ICISCGSLNVTLEHPLFIGGMCQNCKNCFLE). An interaction with the PRC2/EED-EZH2 complex region spans residues 490-582 (CISCGSLNVT…KEDPWNCYMC (93 aa)). The PHD-type; atypical zinc-finger motif lies at 530–586 (QSYCTICCGGREVLMCGNNNCCRCFCVECVDLLVGPGAAQAAIKEDPWNCYMCGHKG). Positions 630-908 (IRVLSLFDGI…APLKEYFACV (279 aa)) constitute an SAM-dependent MTase C5-type domain. Residues 637-641 (DGIAT), E660, and 682-684 (DVR) contribute to the S-adenosyl-L-methionine site. Residue C706 is part of the active site. C706 bears the S-methylcysteine; by autocatalysis mark. Residue 887 to 889 (RSW) participates in S-adenosyl-L-methionine binding.

Belongs to the class I-like SAM-binding methyltransferase superfamily. C5-methyltransferase family. Heterotetramer composed of 1 DNMT3A homodimer and 2 DNMT3L subunits (DNMT3L-DNMT3A-DNMT3A-DNMT3L). Interacts with DNMT1 and DNMT3B. Interacts with MPHOSPH8. Interacts with histone H3 that is not methylated at 'Lys-4' (H3K4). Binds the ZBTB18 transcriptional repressor. Interacts with SETDB1. Associates with HDAC1 through its ADD domain. Interacts with UHRF1. Interacts with the PRC2/EED-EZH2 complex. Interacts with UBC9, PIAS1 and PIAS2. Interacts with SPOCD1. Interacts with ZNF263; recruited to the SIX3 promoter along with other proteins involved in chromatin modification and transcriptional corepression where it contributes to transcriptional repression. In terms of processing, auto-methylated at Cys-706: auto-methylation takes place in absence of DNA substrate and inactivates the DNA methyltransferase activity. Inactivation by auto-methylation may be used to inactivate unused DNA methyltransferases in the cell. Sumoylated; sumoylation disrupts the ability to interact with histone deacetylases (HDAC1 and HDAC2) and repress transcription. In terms of tissue distribution, isoform 1 is expressed ubiquitously at low levels. Expression of isoform 2 is restricted to tissues containing cells which are undergoing active de novo methylation, including spleen, testis and thymus.

The protein resides in the nucleus. The protein localises to the chromosome. Its subcellular location is the cytoplasm. It catalyses the reaction a 2'-deoxycytidine in DNA + S-adenosyl-L-methionine = a 5-methyl-2'-deoxycytidine in DNA + S-adenosyl-L-homocysteine + H(+). The enzyme catalyses L-cysteinyl-[protein] + S-adenosyl-L-methionine = S-methyl-L-cysteinyl-[protein] + S-adenosyl-L-homocysteine + H(+). Activated by binding to the regulatory factor DNMT3L. Auto-methylation at Cys-706 in absence of DNA inactivates the DNA methyltransferase activity. In terms of biological role, required for genome-wide de novo methylation and is essential for the establishment of DNA methylation patterns during development. DNA methylation is coordinated with methylation of histones. It modifies DNA in a non-processive manner and also methylates non-CpG sites. May preferentially methylate DNA linker between 2 nucleosomal cores and is inhibited by histone H1. Plays a role in paternal and maternal imprinting. Required for methylation of most imprinted loci in germ cells. Acts as a transcriptional corepressor for ZBTB18. Recruited to trimethylated 'Lys-36' of histone H3 (H3K36me3) sites. Can actively repress transcription through the recruitment of HDAC activity. Also has weak auto-methylation activity on Cys-706 in absence of DNA. This chain is DNA (cytosine-5)-methyltransferase 3A, found in Mus musculus (Mouse).